Here is a 491-residue protein sequence, read N- to C-terminus: ATP synthase subunit beta, chloroplastic (491 aa).

ATP is bound at residue 163 to 170 (GGAGVGKT).

Belongs to the ATPase alpha/beta chains family. As to quaternary structure, F-type ATPases have 2 components, CF(1) - the catalytic core - and CF(0) - the membrane proton channel. CF(1) has five subunits: alpha(3), beta(3), gamma(1), delta(1), epsilon(1). CF(0) has four main subunits: a(1), b(1), b'(1) and c(9-12).

It localises to the plastid. Its subcellular location is the chloroplast thylakoid membrane. It catalyses the reaction ATP + H2O + 4 H(+)(in) = ADP + phosphate + 5 H(+)(out). Its function is as follows. Produces ATP from ADP in the presence of a proton gradient across the membrane. The catalytic sites are hosted primarily by the beta subunits. The chain is ATP synthase subunit beta, chloroplastic from Nephroselmis olivacea (Green alga).